Consider the following 476-residue polypeptide: MTRFLFALILGFLLTACQQVTVDETEFVPKKLTELRVGTLYGPQIYMTSGQGDSGFDYDMAVLFAEYLDVPLKMVPYTNRTELYEALKKNEIDLIAAGMTETPARREQFRLGPPLYRVNQVLVYREGMPAPKDISDLKGKITVIADSSFVETLTQLQKHYPTLVWDQITDKDSEELLAMIANKEIDYTIADSSSVQINRRYLPDLRSGPVLEEKLDVVWLLPPTRSDELMSQLLAFWHQEKLAGTLDHLNEKYFGHVKRFDYVDTRAFIRAIETVLPRYRQLFETHAGNLDWRKLAATSYQESHWNPHARSATGVRGMMMLTQPTAKEIGITNRLDAEESIRGGAAYLNDMINRLPESIPESQRMWFALASYNIGYAHVEDARKLAESMELNPNAWRDLKKVLPLLQKRKYYQKTRYGYARGSEAVHYVDSIRRYYDTLVWVDNQSKQQNPEEEPSDLASEEPAIPAGTLSPEQPK.

Residues 1 to 22 (MTRFLFALILGFLLTACQQVTV) form the signal peptide. The non-LT domain stretch occupies residues 23–257 (DETEFVPKKL…HLNEKYFGHV (235 aa)). The LT domain stretch occupies residues 258-476 (KRFDYVDTRA…AGTLSPEQPK (219 aa)). The active site involves glutamate 302. A disordered region spans residues 446 to 476 (SKQQNPEEEPSDLASEEPAIPAGTLSPEQPK). The span at 451–460 (PEEEPSDLAS) shows a compositional bias: acidic residues.

The protein in the N-terminal section; belongs to the bacterial solute-binding protein 3 family. This sequence in the C-terminal section; belongs to the transglycosylase Slt family.

It is found in the cell outer membrane. It carries out the reaction Exolytic cleavage of the (1-&gt;4)-beta-glycosidic linkage between N-acetylmuramic acid (MurNAc) and N-acetylglucosamine (GlcNAc) residues in peptidoglycan, from either the reducing or the non-reducing ends of the peptidoglycan chains, with concomitant formation of a 1,6-anhydrobond in the MurNAc residue.. Functionally, murein-degrading enzyme that degrades murein glycan strands and insoluble, high-molecular weight murein sacculi, with the concomitant formation of a 1,6-anhydromuramoyl product. Lytic transglycosylases (LTs) play an integral role in the metabolism of the peptidoglycan (PG) sacculus. Their lytic action creates space within the PG sacculus to allow for its expansion as well as for the insertion of various structures such as secretion systems and flagella. The protein is Membrane-bound lytic murein transglycosylase F of Shewanella baltica (strain OS155 / ATCC BAA-1091).